The chain runs to 61 residues: Small ribosomal subunit protein uS14B (61 aa).

Residues Cys-24, Cys-27, Cys-40, and Cys-43 each contribute to the Zn(2+) site.

The protein belongs to the universal ribosomal protein uS14 family. Zinc-binding uS14 subfamily. In terms of assembly, part of the 30S ribosomal subunit. Contacts proteins S3 and S10. Requires Zn(2+) as cofactor.

In terms of biological role, binds 16S rRNA, required for the assembly of 30S particles and may also be responsible for determining the conformation of the 16S rRNA at the A site. This chain is Small ribosomal subunit protein uS14B, found in Ligilactobacillus salivarius (strain UCC118) (Lactobacillus salivarius).